Consider the following 74-residue polypeptide: Protein krueppel (74 aa).

4 C2H2-type zinc fingers span residues 1 to 4, 10 to 32, 38 to 60, and 66 to 74; these read ERTH, FECQ…MRLH, YRCE…LRVH, and YGCEHCSMK.

Belongs to the krueppel C2H2-type zinc-finger protein family.

The protein localises to the nucleus. Functionally, krueppel is a gap class segmentation protein. The chain is Protein krueppel (Kr) from Tribolium castaneum (Red flour beetle).